The sequence spans 37 residues: Large ribosomal subunit protein bL36c (37 aa).

The protein belongs to the bacterial ribosomal protein bL36 family.

The protein localises to the plastid. The protein resides in the chloroplast. The protein is Large ribosomal subunit protein bL36c (rpl36) of Cyanidium caldarium (Red alga).